The primary structure comprises 257 residues: AA9 family lytic polysaccharide monooxygenase U (257 aa).

Positions 1–19 are cleaved as a signal peptide; the sequence is MKLYLAAFLGAVATPGAFA. Histidine 20 contributes to the Cu(2+) binding site. 2 N-linked (GlcNAc...) asparagine glycosylation sites follow: asparagine 29 and asparagine 71. The cysteines at positions 74 and 194 are disulfide-linked. Histidine 113 lines the Cu(2+) pocket. N-linked (GlcNAc...) asparagine glycosylation is present at asparagine 161. Position 189 (glutamine 189) interacts with O2. Tyrosine 191 is a Cu(2+) binding site.

This sequence belongs to the polysaccharide monooxygenase AA9 family. It depends on Cu(2+) as a cofactor.

The protein resides in the secreted. The enzyme catalyses [(1-&gt;4)-beta-D-glucosyl]n+m + reduced acceptor + O2 = 4-dehydro-beta-D-glucosyl-[(1-&gt;4)-beta-D-glucosyl]n-1 + [(1-&gt;4)-beta-D-glucosyl]m + acceptor + H2O.. Its function is as follows. Lytic polysaccharide monooxygenase (LPMO) that depolymerizes crystalline and amorphous polysaccharides via the oxidation of scissile alpha- or beta-(1-4)-glycosidic bonds, yielding C1 and C4 oxidation products. Catalysis by LPMOs requires the reduction of the active-site copper from Cu(II) to Cu(I) by a reducing agent and H(2)O(2) or O(2) as a cosubstrate. Shows no activity on wheat arabinoxylan, konjac glucomannan, acetylated spruce galactoglucomannan, or cellopentaose. The protein is AA9 family lytic polysaccharide monooxygenase U of Thermothielavioides terrestris (strain ATCC 38088 / NRRL 8126) (Thielavia terrestris).